Reading from the N-terminus, the 412-residue chain is Sterol-4-alpha-carboxylate 3-dehydrogenase erg26, decarboxylating (412 aa).

Residues 17 to 23 (GGCGFLG), 89 to 90 (DI), and 111 to 113 (TAT) contribute to the NADP(+) site. Substrate contacts are provided by Ser-158 and Tyr-188. NADP(+)-binding positions include Tyr-188, Lys-192, and 217–220 (PAGI). Lys-192 acts as the Proton donor in catalysis.

This sequence belongs to the 3-beta-HSD family. In terms of assembly, heterotetramer of erg25, erg26, erg27 and erg28. Erg28 acts as a scaffold to tether erg27 and other 4,4-demethylation-related enzymes, forming a demethylation enzyme complex, in the endoplasmic reticulum.

Its subcellular location is the endoplasmic reticulum membrane. Its pathway is steroid metabolism; ergosterol biosynthesis. In terms of biological role, sterol-C4-methyl oxidase; part of the third module of ergosterol biosynthesis pathway that includes the late steps of the pathway. Erg26 is a catalytic component of the C-4 demethylation complex that catalyzes the conversion of 4,4-dimethylfecosterol into fecosterol via 4-methylfecosterol. The third module or late pathway involves the ergosterol synthesis itself through consecutive reactions that mainly occur in the endoplasmic reticulum (ER) membrane. Firstly, the squalene synthase erg9 catalyzes the condensation of 2 farnesyl pyrophosphate moieties to form squalene, which is the precursor of all steroids. Squalene synthase is crucial for balancing the incorporation of farnesyl diphosphate (FPP) into sterol and nonsterol isoprene synthesis. Secondly, squalene is converted into lanosterol by the consecutive action of the squalene epoxidase erg1 and the lanosterol synthase erg7. Then, the delta(24)-sterol C-methyltransferase erg6 methylates lanosterol at C-24 to produce eburicol. Eburicol is the substrate of the sterol 14-alpha demethylase encoded by cyp51A and cyp51B, to yield 4,4,24-trimethyl ergosta-8,14,24(28)-trienol. The C-14 reductase erg24 then reduces the C14=C15 double bond which leads to 4,4-dimethylfecosterol. A sequence of further demethylations at C-4, involving the C-4 demethylation complex containing the C-4 methylsterol oxidases erg25A or erg25B, the sterol-4-alpha-carboxylate 3-dehydrogenase erg26 and the 3-keto-steroid reductase erg27, leads to the production of fecosterol via 4-methylfecosterol. The C-8 sterol isomerase erg2 then catalyzes the reaction which results in unsaturation at C-7 in the B ring of sterols and thus converts fecosterol to episterol. The sterol-C5-desaturase erg3B then catalyzes the introduction of a C-5 double bond in the B ring to produce 5-dehydroepisterol. The 2 other sterol-C5-desaturases, erg3A and erg3C, seem to be less important in ergosterol biosynthesis. The C-22 sterol desaturase erg5 further converts 5-dehydroepisterol into ergosta-5,7,22,24(28)-tetraen-3beta-ol by forming the C-22(23) double bond in the sterol side chain. Finally, ergosta-5,7,22,24(28)-tetraen-3beta-ol is substrate of the C-24(28) sterol reductases erg4A and erg4B to produce ergosterol. Possible alternative sterol biosynthetic pathways might exist from fecosterol to ergosterol, depending on the activities of the erg3 isoforms. The polypeptide is Sterol-4-alpha-carboxylate 3-dehydrogenase erg26, decarboxylating (Aspergillus fumigatus (strain ATCC MYA-4609 / CBS 101355 / FGSC A1100 / Af293) (Neosartorya fumigata)).